We begin with the raw amino-acid sequence, 167 residues long: UTP pyrophosphatase (167 aa).

The enzyme catalyses UTP + H2O = UMP + diphosphate + H(+). Its function is as follows. Specifically catalyzes the hydrolysis of UTP to UMP and diphosphate in vitro, albeit at apparently slow rate. Shows no activity towards ATP, GTP, CTP, dTTP and ITP as substrates. The chain is UTP pyrophosphatase from Escherichia coli (strain K12).